The sequence spans 257 residues: V-type proton ATPase subunit D (257 aa).

A disordered region spans residues 211–233 (KKKDLKAKEAQKEENSANKTIME). The segment covering 216–226 (KAKEAQKEENS) has biased composition (basic and acidic residues).

The protein belongs to the V-ATPase D subunit family. As to quaternary structure, V-ATPase is a heteromultimeric enzyme composed of a peripheral catalytic V1 complex (components A to H) attached to an integral membrane V0 proton pore complex (components: a, c, c', c'' and d).

Its function is as follows. Subunit of the peripheral V1 complex of vacuolar ATPase. Vacuolar ATPase is responsible for acidifying a variety of intracellular compartments in eukaryotic cells, thus providing most of the energy required for transport processes in the vacuolar system. The protein is V-type proton ATPase subunit D (atp6v1d) of Dictyostelium discoideum (Social amoeba).